The sequence spans 576 residues: Ecdysone receptor (576 aa).

The tract at residues 1 to 162 is modulating; it reads MSLGARGYRR…GPAPRQQEEL (162 aa). The disordered stretch occupies residues 87–154; that stretch reads CTMEQQQPQP…GEARRQKKGP (68 aa). Residues 91 to 106 show a composition bias toward low complexity; it reads QQQPQPQQQPQQTQPL. The span at 107-117 shows a compositional bias: pro residues; that stretch reads PSMPLPMPPTT. 2 consecutive NR C4-type zinc fingers follow at residues 163 to 183 and 199 to 223; these read CLVCGDRASGYHYNALTCEGC and CKFGHACEMDIYMRRKCQECRLKKC. Residues 163–235 constitute a DNA-binding region (nuclear receptor); that stretch reads CLVCGDRASG…VGMRPECVVP (73 aa). The interval 245-269 is disordered; sequence EKKAQREKDKLPVSTTTVDDHMPPI. One can recognise an NR LBD domain in the interval 314–548; sequence NQKSLIARLV…FLEEIWDVAD (235 aa).

It belongs to the nuclear hormone receptor family. NR1 subfamily.

Its subcellular location is the nucleus. Functionally, receptor for ecdysone. Binds to ecdysone response elements (ECRES). The polypeptide is Ecdysone receptor (EcR) (Heliothis virescens (Tobacco budworm moth)).